The sequence spans 365 residues: Guanine nucleotide-binding protein alpha-6 subunit (365 aa).

Gly-2 carries the N-myristoyl glycine lipid modification. In terms of domain architecture, G-alpha spans 42 to 364; it reads NRFKILLLGT…NENLRSAGLH (323 aa). The tract at residues 45–58 is G1 motif; it reads KILLLGTAESGKST. GTP is bound by residues 50-57, 187-193, 212-216, 281-284, and Ala-336; these read GTAESGKS, VHCRIST, DVGGQ, and NKYD. Mg(2+) is bound by residues Ser-57 and Thr-193. Residues 185–193 are G2 motif; the sequence is DIVHCRIST. The tract at residues 208–217 is G3 motif; sequence FKMVDVGGQR. The tract at residues 277-284 is G4 motif; it reads VLFLNKYD. Positions 334 to 339 are G5 motif; the sequence is TTATDT.

The protein belongs to the G-alpha family. In terms of assembly, g proteins are composed of 3 units; alpha, beta and gamma. The alpha chain contains the guanine nucleotide binding site.

Guanine nucleotide-binding proteins (G proteins) are involved as modulators or transducers in various transmembrane signaling systems. The chain is Guanine nucleotide-binding protein alpha-6 subunit (gpa-6) from Caenorhabditis briggsae.